The primary structure comprises 32 residues: Jingzhaotoxin F4-32.60 (32 aa).

Cystine bridges form between Cys2-Cys17, Cys9-Cys22, and Cys16-Cys29. Position 31 is an aspartic acid 1-amide (Asp31).

This sequence belongs to the neurotoxin 10 (Hwtx-1) family. 30 (Jztx-14) subfamily. Amidated as well as non-amidated forms are found in the venom. In terms of tissue distribution, expressed by the venom gland.

The protein localises to the secreted. In terms of biological role, probable ion channel inhibitor. The chain is Jingzhaotoxin F4-32.60 from Chilobrachys guangxiensis (Chinese earth tiger tarantula).